A 178-amino-acid chain; its full sequence is Large ribosomal subunit protein bL25 (178 aa).

The protein belongs to the bacterial ribosomal protein bL25 family. CTC subfamily. As to quaternary structure, part of the 50S ribosomal subunit; part of the 5S rRNA/L5/L18/L25 subcomplex. Contacts the 5S rRNA. Binds to the 5S rRNA independently of L5 and L18.

Functionally, this is one of the proteins that binds to the 5S RNA in the ribosome where it forms part of the central protuberance. In Helicobacter pylori (strain ATCC 700392 / 26695) (Campylobacter pylori), this protein is Large ribosomal subunit protein bL25.